Reading from the N-terminus, the 429-residue chain is Serine hydroxymethyltransferase 1 (429 aa).

(6S)-5,6,7,8-tetrahydrofolate contacts are provided by residues leucine 125 and 129–131; that span reads GHL. Lysine 234 is modified (N6-(pyridoxal phosphate)lysine).

The protein belongs to the SHMT family. Homodimer. It depends on pyridoxal 5'-phosphate as a cofactor.

It localises to the cytoplasm. It catalyses the reaction (6R)-5,10-methylene-5,6,7,8-tetrahydrofolate + glycine + H2O = (6S)-5,6,7,8-tetrahydrofolate + L-serine. It functions in the pathway one-carbon metabolism; tetrahydrofolate interconversion. Its pathway is amino-acid biosynthesis; glycine biosynthesis; glycine from L-serine: step 1/1. Functionally, catalyzes the reversible interconversion of serine and glycine with tetrahydrofolate (THF) serving as the one-carbon carrier. This reaction serves as the major source of one-carbon groups required for the biosynthesis of purines, thymidylate, methionine, and other important biomolecules. Also exhibits THF-independent aldolase activity toward beta-hydroxyamino acids, producing glycine and aldehydes, via a retro-aldol mechanism. In Agrobacterium fabrum (strain C58 / ATCC 33970) (Agrobacterium tumefaciens (strain C58)), this protein is Serine hydroxymethyltransferase 1.